The chain runs to 346 residues: Ketol-acid reductoisomerase (NADP(+)) (346 aa).

The 141-residue stretch at 1-141 (KKNSILKKNQ…GAHHAGVLES (141 aa)) folds into the KARI N-terminal Rossmann domain. NADP(+) is bound by residues Ser11 and 41–43 (DKQ). Residue His65 is part of the active site. Residue Gly91 coordinates NADP(+). 2 KARI C-terminal knotted domains span residues 142–286 (SFVA…PEQE) and 287–346 (YYDH…NKVI). Residues Asp150, Glu154, Glu322, and Glu326 each contribute to the Mg(2+) site.

It belongs to the ketol-acid reductoisomerase family. Mg(2+) is required as a cofactor.

The catalysed reaction is (2R)-2,3-dihydroxy-3-methylbutanoate + NADP(+) = (2S)-2-acetolactate + NADPH + H(+). It catalyses the reaction (2R,3R)-2,3-dihydroxy-3-methylpentanoate + NADP(+) = (S)-2-ethyl-2-hydroxy-3-oxobutanoate + NADPH + H(+). It functions in the pathway amino-acid biosynthesis; L-isoleucine biosynthesis; L-isoleucine from 2-oxobutanoate: step 2/4. Its pathway is amino-acid biosynthesis; L-valine biosynthesis; L-valine from pyruvate: step 2/4. Involved in the biosynthesis of branched-chain amino acids (BCAA). Catalyzes an alkyl-migration followed by a ketol-acid reduction of (S)-2-acetolactate (S2AL) to yield (R)-2,3-dihydroxy-isovalerate. In the isomerase reaction, S2AL is rearranged via a Mg-dependent methyl migration to produce 3-hydroxy-3-methyl-2-ketobutyrate (HMKB). In the reductase reaction, this 2-ketoacid undergoes a metal-dependent reduction by NADPH to yield (R)-2,3-dihydroxy-isovalerate. The chain is Ketol-acid reductoisomerase (NADP(+)) (ilvC) from Buchnera aphidicola subsp. Uroleucon rurale.